The chain runs to 329 residues: Pantothenate kinase (329 aa).

107–114 (GSVAVGKS) provides a ligand contact to ATP.

Belongs to the prokaryotic pantothenate kinase family.

It is found in the cytoplasm. The enzyme catalyses (R)-pantothenate + ATP = (R)-4'-phosphopantothenate + ADP + H(+). It functions in the pathway cofactor biosynthesis; coenzyme A biosynthesis; CoA from (R)-pantothenate: step 1/5. The polypeptide is Pantothenate kinase (Streptomyces avermitilis (strain ATCC 31267 / DSM 46492 / JCM 5070 / NBRC 14893 / NCIMB 12804 / NRRL 8165 / MA-4680)).